Reading from the N-terminus, the 147-residue chain is Hemoglobin subunit beta (147 aa).

The Globin domain maps to 3–147 (HWTAEEKQII…VAHALARKYH (145 aa)). The heme b site is built by His64 and His93.

As to quaternary structure, heterotetramer of two alpha (or alpha-D) and two beta chains. As to expression, red blood cells.

Functionally, involved in oxygen transport from the lung to the various peripheral tissues. The beta chain is a component of adult hemoglobin A and D. The sequence is that of Hemoglobin subunit beta from Aythya fuligula (Tufted duck).